The following is a 161-amino-acid chain: Non-specific lipid transfer protein GPI-anchored 24 (161 aa).

An N-terminal signal peptide occupies residues 1–23 (MAQTTTLILLLATLLVAATTVSG). Disulfide bonds link C42–C79, C49–C63, C64–C104, and C77–C113. A glycan (N-linked (GlcNAc...) asparagine) is linked at N92. D138 carries GPI-anchor amidated aspartate lipidation. Positions 139 to 161 (AASKLAGTGLVGIVVITIAAMFY) are cleaved as a propeptide — removed in mature form.

Belongs to the plant LTP family.

It localises to the cell membrane. Its function is as follows. Probable lipid transfer protein. The polypeptide is Non-specific lipid transfer protein GPI-anchored 24 (Arabidopsis thaliana (Mouse-ear cress)).